A 144-amino-acid chain; its full sequence is 3-dehydroquinate dehydratase (144 aa).

The Proton acceptor role is filled by Y22. The substrate site is built by N73, H79, and D86. H99 functions as the Proton donor in the catalytic mechanism. Substrate contacts are provided by residues 100–101 and R110; that span reads LS.

Belongs to the type-II 3-dehydroquinase family. In terms of assembly, homododecamer.

The catalysed reaction is 3-dehydroquinate = 3-dehydroshikimate + H2O. It functions in the pathway metabolic intermediate biosynthesis; chorismate biosynthesis; chorismate from D-erythrose 4-phosphate and phosphoenolpyruvate: step 3/7. Functionally, catalyzes a trans-dehydration via an enolate intermediate. The sequence is that of 3-dehydroquinate dehydratase from Herpetosiphon aurantiacus (strain ATCC 23779 / DSM 785 / 114-95).